The following is a 116-amino-acid chain: Small ribosomal subunit protein bS18c (116 aa).

Residues 1 to 13 (MKPSFRNTSPSFR) are compositionally biased toward polar residues. A disordered region spans residues 1–51 (MKPSFRNTSPSFRNRSKPYFRNRSKPYFRNRSKPSFRNTSKRFSPNQQSFR). Residues 14-34 (NRSKPYFRNRSKPYFRNRSKP) show a composition bias toward basic residues. The segment covering 35-49 (SFRNTSKRFSPNQQS) has biased composition (polar residues).

The protein belongs to the bacterial ribosomal protein bS18 family. As to quaternary structure, part of the 30S ribosomal subunit.

The protein localises to the plastid. The protein resides in the chloroplast. The protein is Small ribosomal subunit protein bS18c of Cryptomeria japonica (Japanese cedar).